The following is a 484-amino-acid chain: Sodium-dependent glucose transporter 1 (484 aa).

Ser6 is modified (phosphoserine). Helical transmembrane passes span 40–60 (WFTT…AAVL), 80–100 (EIFV…GVLF), 106–126 (FLLL…TPFC), 135–155 (MMSI…VLIL), 168–188 (ALHF…KLAW), 227–247 (LLWA…FLFA), 274–294 (ALLC…VTYG), 317–337 (SIFW…ATLL), 340–360 (GTMM…LVLF), 366–386 (CLWI…PSGI), 401–421 (AFIL…SGIL), and 428–448 (LPVI…LFPV).

The protein belongs to the major facilitator superfamily. Expressed in brain, liver, lung, and kidney. In kidney expressed in cortex and inner medulla, in ascending thin limbs (ATLs) and lower descending thin limbs (DTLs). Primarily expressed in the proximal tubules of the kidney.

Its subcellular location is the apical cell membrane. Its function is as follows. May function as a sodium-dependent glucose transporter. Potential channels for urea in the inner medulla of kidney. In Rattus norvegicus (Rat), this protein is Sodium-dependent glucose transporter 1.